A 263-amino-acid chain; its full sequence is MRQSKKLGQCFLKDKNFVKKAINRAELTDKDIVLEVGLGEGALTKELAKIAKKVYVIELDERLKPFADEITSEFENVEIIWSDALKVDLKTLGFNKIVANLPYQISSPITFKFLEEDFEVAVLMYQYEFAKRMAGKPDTKEYSRLSVAVQYNADVEFICKVPPSAFSPKPDVNSAIVKLTKREPKYHVKDEEFFKKVLKAIFQHRNRTIKRALIDSSHEIGIERNILKEILEKIENKFEFTERVFKTPPEKIGYLSNLLYDEI.

Positions 12, 37, 58, 83, and 100 each coordinate S-adenosyl-L-methionine.

Belongs to the class I-like SAM-binding methyltransferase superfamily. rRNA adenine N(6)-methyltransferase family. RsmA subfamily.

The protein resides in the cytoplasm. Specifically dimethylates two adjacent adenosines in the loop of a conserved hairpin near the 3'-end of 16S rRNA in the 30S particle. May play a critical role in biogenesis of 30S subunits. This Methanococcus maripaludis (strain C7 / ATCC BAA-1331) protein is Probable ribosomal RNA small subunit methyltransferase A.